The chain runs to 91 residues: MTDAVDAEEIRHVADLARLRLDDEDVDTVVDHCGDILEHFERLEEVPEVDAEPELVNVMRADEIADSLDQDDALANAPETEDGRFKGPNVS.

Positions 68–91 (LDQDDALANAPETEDGRFKGPNVS) are disordered.

The protein belongs to the GatC family. As to quaternary structure, heterotrimer of A, B and C subunits.

The enzyme catalyses L-glutamyl-tRNA(Gln) + L-glutamine + ATP + H2O = L-glutaminyl-tRNA(Gln) + L-glutamate + ADP + phosphate + H(+). The catalysed reaction is L-aspartyl-tRNA(Asn) + L-glutamine + ATP + H2O = L-asparaginyl-tRNA(Asn) + L-glutamate + ADP + phosphate + 2 H(+). Functionally, allows the formation of correctly charged Asn-tRNA(Asn) or Gln-tRNA(Gln) through the transamidation of misacylated Asp-tRNA(Asn) or Glu-tRNA(Gln) in organisms which lack either or both of asparaginyl-tRNA or glutaminyl-tRNA synthetases. The reaction takes place in the presence of glutamine and ATP through an activated phospho-Asp-tRNA(Asn) or phospho-Glu-tRNA(Gln). The protein is Aspartyl/glutamyl-tRNA(Asn/Gln) amidotransferase subunit C of Halobacterium salinarum (strain ATCC 29341 / DSM 671 / R1).